The chain runs to 1096 residues: DNA-directed RNA polymerase subunit beta (1096 aa).

The protein belongs to the RNA polymerase beta chain family. As to quaternary structure, in plastids the minimal PEP RNA polymerase catalytic core is composed of four subunits: alpha, beta, beta', and beta''. When a (nuclear-encoded) sigma factor is associated with the core the holoenzyme is formed, which can initiate transcription.

The protein resides in the plastid. It is found in the chloroplast. It carries out the reaction RNA(n) + a ribonucleoside 5'-triphosphate = RNA(n+1) + diphosphate. Functionally, DNA-dependent RNA polymerase catalyzes the transcription of DNA into RNA using the four ribonucleoside triphosphates as substrates. The protein is DNA-directed RNA polymerase subunit beta of Guillardia theta (Cryptophyte).